Consider the following 123-residue polypeptide: Ribosome-binding factor A (123 aa).

The protein belongs to the RbfA family. Monomer. Binds 30S ribosomal subunits, but not 50S ribosomal subunits or 70S ribosomes.

It is found in the cytoplasm. Its function is as follows. One of several proteins that assist in the late maturation steps of the functional core of the 30S ribosomal subunit. Associates with free 30S ribosomal subunits (but not with 30S subunits that are part of 70S ribosomes or polysomes). Required for efficient processing of 16S rRNA. May interact with the 5'-terminal helix region of 16S rRNA. The chain is Ribosome-binding factor A from Neisseria gonorrhoeae (strain NCCP11945).